The primary structure comprises 433 residues: 23S rRNA (uracil(1939)-C(5))-methyltransferase RlmD (433 aa).

In terms of domain architecture, TRAM spans 1–53 (MPTAVIESLDHEGRGIARVEGKAVFIEGGLPGETVEYRVLRSKPNYEQAEATR). 4 residues coordinate [4Fe-4S] cluster: Cys66, Cys72, Cys75, and Cys154. S-adenosyl-L-methionine contacts are provided by Gln263, Phe292, Asn297, Glu313, Asn341, and Asp362. Cys389 acts as the Nucleophile in catalysis.

Belongs to the class I-like SAM-binding methyltransferase superfamily. RNA M5U methyltransferase family. RlmD subfamily.

The catalysed reaction is uridine(1939) in 23S rRNA + S-adenosyl-L-methionine = 5-methyluridine(1939) in 23S rRNA + S-adenosyl-L-homocysteine + H(+). In terms of biological role, catalyzes the formation of 5-methyl-uridine at position 1939 (m5U1939) in 23S rRNA. The sequence is that of 23S rRNA (uracil(1939)-C(5))-methyltransferase RlmD from Azoarcus sp. (strain BH72).